An 85-amino-acid polypeptide reads, in one-letter code: MTDKIRSVQGRVVSDKMEKSFVVAIERKVKHPLYGKFIRRTTKLHVHDENNEAKLGDLVEVRECRPISKTKSWTLVRVVEKAVIA.

The protein belongs to the universal ribosomal protein uS17 family. In terms of assembly, part of the 30S ribosomal subunit.

Its function is as follows. One of the primary rRNA binding proteins, it binds specifically to the 5'-end of 16S ribosomal RNA. The polypeptide is Small ribosomal subunit protein uS17 (Aggregatibacter actinomycetemcomitans (Actinobacillus actinomycetemcomitans)).